The chain runs to 475 residues: Ribulose bisphosphate carboxylase large chain (475 aa).

Substrate is bound by residues Asn-123 and Thr-173. Lys-175 functions as the Proton acceptor in the catalytic mechanism. Lys-177 provides a ligand contact to substrate. 3 residues coordinate Mg(2+): Lys-201, Asp-203, and Glu-204. Lys-201 is subject to N6-carboxylysine. Catalysis depends on His-294, which acts as the Proton acceptor. Residues Arg-295, His-327, and Ser-379 each coordinate substrate.

It belongs to the RuBisCO large chain family. Type I subfamily. In terms of assembly, heterohexadecamer of 8 large chains and 8 small chains. Requires Mg(2+) as cofactor.

The protein resides in the plastid. It is found in the chloroplast. It catalyses the reaction 2 (2R)-3-phosphoglycerate + 2 H(+) = D-ribulose 1,5-bisphosphate + CO2 + H2O. The enzyme catalyses D-ribulose 1,5-bisphosphate + O2 = 2-phosphoglycolate + (2R)-3-phosphoglycerate + 2 H(+). Functionally, ruBisCO catalyzes two reactions: the carboxylation of D-ribulose 1,5-bisphosphate, the primary event in carbon dioxide fixation, as well as the oxidative fragmentation of the pentose substrate in the photorespiration process. Both reactions occur simultaneously and in competition at the same active site. This Bigelowiella natans (Pedinomonas minutissima) protein is Ribulose bisphosphate carboxylase large chain.